Here is a 210-residue protein sequence, read N- to C-terminus: Imidazole glycerol phosphate synthase subunit HisH (210 aa).

One can recognise a Glutamine amidotransferase type-1 domain in the interval 7–210; sequence KVVIIDTGCA…SQLIKNFLEM (204 aa). Cys-82 acts as the Nucleophile in catalysis. Active-site residues include His-192 and Glu-194.

In terms of assembly, heterodimer of HisH and HisF.

The protein localises to the cytoplasm. The catalysed reaction is 5-[(5-phospho-1-deoxy-D-ribulos-1-ylimino)methylamino]-1-(5-phospho-beta-D-ribosyl)imidazole-4-carboxamide + L-glutamine = D-erythro-1-(imidazol-4-yl)glycerol 3-phosphate + 5-amino-1-(5-phospho-beta-D-ribosyl)imidazole-4-carboxamide + L-glutamate + H(+). It catalyses the reaction L-glutamine + H2O = L-glutamate + NH4(+). It functions in the pathway amino-acid biosynthesis; L-histidine biosynthesis; L-histidine from 5-phospho-alpha-D-ribose 1-diphosphate: step 5/9. In terms of biological role, IGPS catalyzes the conversion of PRFAR and glutamine to IGP, AICAR and glutamate. The HisH subunit catalyzes the hydrolysis of glutamine to glutamate and ammonia as part of the synthesis of IGP and AICAR. The resulting ammonia molecule is channeled to the active site of HisF. The polypeptide is Imidazole glycerol phosphate synthase subunit HisH (Photobacterium profundum (strain SS9)).